Consider the following 391-residue polypeptide: UPF0229 protein CA_C0580 (391 aa).

Disordered stretches follow at residues 1 to 20 (MAIF…TIGD) and 75 to 109 (VGSG…NSEG). Residues 96 to 106 (GSKGKGKGAGN) show a composition bias toward gly residues.

The protein belongs to the UPF0229 family.

The chain is UPF0229 protein CA_C0580 from Clostridium acetobutylicum (strain ATCC 824 / DSM 792 / JCM 1419 / IAM 19013 / LMG 5710 / NBRC 13948 / NRRL B-527 / VKM B-1787 / 2291 / W).